The primary structure comprises 312 residues: Ribosomal protein L11 methyltransferase (312 aa).

Thr-162, Gly-183, Asp-205, and Asn-248 together coordinate S-adenosyl-L-methionine.

This sequence belongs to the methyltransferase superfamily. PrmA family.

It is found in the cytoplasm. It carries out the reaction L-lysyl-[protein] + 3 S-adenosyl-L-methionine = N(6),N(6),N(6)-trimethyl-L-lysyl-[protein] + 3 S-adenosyl-L-homocysteine + 3 H(+). Methylates ribosomal protein L11. This is Ribosomal protein L11 methyltransferase from Geobacillus kaustophilus (strain HTA426).